The primary structure comprises 95 residues: Co-chaperonin GroES (95 aa).

Belongs to the GroES chaperonin family. As to quaternary structure, heptamer of 7 subunits arranged in a ring. Interacts with the chaperonin GroEL.

The protein localises to the cytoplasm. Together with the chaperonin GroEL, plays an essential role in assisting protein folding. The GroEL-GroES system forms a nano-cage that allows encapsulation of the non-native substrate proteins and provides a physical environment optimized to promote and accelerate protein folding. GroES binds to the apical surface of the GroEL ring, thereby capping the opening of the GroEL channel. This chain is Co-chaperonin GroES, found in Geobacter sulfurreducens (strain ATCC 51573 / DSM 12127 / PCA).